Reading from the N-terminus, the 274-residue chain is uncharacterized protein (274 aa).

This sequence belongs to the PhoU family.

This is an uncharacterized protein from Deinococcus radiodurans (strain ATCC 13939 / DSM 20539 / JCM 16871 / CCUG 27074 / LMG 4051 / NBRC 15346 / NCIMB 9279 / VKM B-1422 / R1).